The chain runs to 333 residues: Ribosomal RNA small subunit methyltransferase H (333 aa).

S-adenosyl-L-methionine-binding positions include 36–38, Asp54, Phe81, Asp102, and Gln109; that span reads GGY.

Belongs to the methyltransferase superfamily. RsmH family.

It localises to the cytoplasm. The enzyme catalyses cytidine(1402) in 16S rRNA + S-adenosyl-L-methionine = N(4)-methylcytidine(1402) in 16S rRNA + S-adenosyl-L-homocysteine + H(+). Functionally, specifically methylates the N4 position of cytidine in position 1402 (C1402) of 16S rRNA. The chain is Ribosomal RNA small subunit methyltransferase H from Afipia carboxidovorans (strain ATCC 49405 / DSM 1227 / KCTC 32145 / OM5) (Oligotropha carboxidovorans).